A 150-amino-acid chain; its full sequence is uncharacterized protein (150 aa).

The N-terminal stretch at 1–21 is a signal peptide; it reads MAMEMAMMGLLGTVVGASAMG.

This is an uncharacterized protein from Mycobacterium tuberculosis (strain CDC 1551 / Oshkosh).